The chain runs to 292 residues: Short chain dehydrogenase mpl6 (292 aa).

NADP(+)-binding residues include V37, D95, N122, R156, Y188, K192, V221, and T223. Y188 serves as the catalytic Proton donor. The active-site Lowers pKa of active site Tyr is the K192.

It belongs to the short-chain dehydrogenases/reductases (SDR) family.

It participates in mycotoxin biosynthesis. In terms of biological role, short chain dehydrogenase; part of the gene cluster that mediates the biosynthesis of the mycotoxin citrinin, a hepato-nephrotoxic compound to humans due to inhibition of respiration complex III. The pathway begins with the synthesis of a keto-aldehyde intermediate by the citrinin PKS (pksCT) from successive condensations of 4 malonyl-CoA units, presumably with a simple acetyl-CoA starter unit. Release of the keto-aldehyde intermediate is consistent with the presence of the C-terminal reductive release domain. Mp11 collaborates with pksCT by catalyzing the hydrolysis of ACP-bound acyl intermediates to free the ACP from stalled intermediates. Mpl2 then catalyzes the oxidation of the C-12 methyl of the ketone intermediate to an alcohol intermediate which is further oxidized by the oxidoreductase mpl7 to produce a bisaldehyde intermediate. The fourth catalytic step is catalyzed by the mpl4 aldehyde dehydrogenase. The final transformation is the reduction of C-3 by mpl6 to provide the chemically stable citrinin nucleus. In Monascus purpureus (Red mold), this protein is Short chain dehydrogenase mpl6.